The following is a 213-amino-acid chain: Urease accessory protein UreE (213 aa).

The segment at 170–213 (EHHGRSHSHSHSHSHDHDHDHDHDHDHDHQHGPSCSHGHGHGHR) is disordered. Positions 182–200 (HSHDHDHDHDHDHDHDHQH) are enriched in basic and acidic residues.

This sequence belongs to the UreE family.

The protein resides in the cytoplasm. In terms of biological role, involved in urease metallocenter assembly. Binds nickel. Probably functions as a nickel donor during metallocenter assembly. This Burkholderia thailandensis (strain ATCC 700388 / DSM 13276 / CCUG 48851 / CIP 106301 / E264) protein is Urease accessory protein UreE.